We begin with the raw amino-acid sequence, 183 residues long: ATP synthase subunit b, chloroplastic (183 aa).

Residues 27 to 49 (LATNLINLTVVVGVLIFFGKGVL) traverse the membrane as a helical segment.

Belongs to the ATPase B chain family. F-type ATPases have 2 components, F(1) - the catalytic core - and F(0) - the membrane proton channel. F(1) has five subunits: alpha(3), beta(3), gamma(1), delta(1), epsilon(1). F(0) has four main subunits: a(1), b(1), b'(1) and c(10-14). The alpha and beta chains form an alternating ring which encloses part of the gamma chain. F(1) is attached to F(0) by a central stalk formed by the gamma and epsilon chains, while a peripheral stalk is formed by the delta, b and b' chains.

The protein localises to the plastid. It localises to the chloroplast thylakoid membrane. Its function is as follows. F(1)F(0) ATP synthase produces ATP from ADP in the presence of a proton or sodium gradient. F-type ATPases consist of two structural domains, F(1) containing the extramembraneous catalytic core and F(0) containing the membrane proton channel, linked together by a central stalk and a peripheral stalk. During catalysis, ATP synthesis in the catalytic domain of F(1) is coupled via a rotary mechanism of the central stalk subunits to proton translocation. In terms of biological role, component of the F(0) channel, it forms part of the peripheral stalk, linking F(1) to F(0). The chain is ATP synthase subunit b, chloroplastic from Lolium perenne (Perennial ryegrass).